A 476-amino-acid chain; its full sequence is Bifunctional protein HldE (476 aa).

A ribokinase region spans residues 1-319 (MKVSLPAFEK…EALALHHGES (319 aa)). 195–198 (NMSE) provides a ligand contact to ATP. D264 is an active-site residue. The interval 345–476 (MTNGCFDILH…AIIQNIMANQ (132 aa)) is cytidylyltransferase.

The protein in the N-terminal section; belongs to the carbohydrate kinase PfkB family. In the C-terminal section; belongs to the cytidylyltransferase family. In terms of assembly, homodimer.

It carries out the reaction D-glycero-beta-D-manno-heptose 7-phosphate + ATP = D-glycero-beta-D-manno-heptose 1,7-bisphosphate + ADP + H(+). The catalysed reaction is D-glycero-beta-D-manno-heptose 1-phosphate + ATP + H(+) = ADP-D-glycero-beta-D-manno-heptose + diphosphate. The protein operates within nucleotide-sugar biosynthesis; ADP-L-glycero-beta-D-manno-heptose biosynthesis; ADP-L-glycero-beta-D-manno-heptose from D-glycero-beta-D-manno-heptose 7-phosphate: step 1/4. Its pathway is nucleotide-sugar biosynthesis; ADP-L-glycero-beta-D-manno-heptose biosynthesis; ADP-L-glycero-beta-D-manno-heptose from D-glycero-beta-D-manno-heptose 7-phosphate: step 3/4. Its function is as follows. Catalyzes the phosphorylation of D-glycero-D-manno-heptose 7-phosphate at the C-1 position to selectively form D-glycero-beta-D-manno-heptose-1,7-bisphosphate. In terms of biological role, catalyzes the ADP transfer from ATP to D-glycero-beta-D-manno-heptose 1-phosphate, yielding ADP-D-glycero-beta-D-manno-heptose. This is Bifunctional protein HldE from Shewanella baltica (strain OS195).